The following is a 717-amino-acid chain: P-loop NTPase domain-containing protein LPA1 homolog 2 (717 aa).

Disordered regions lie at residues 235–259 (KKLKGSRGVNSNAQKTDAGSNSSTT) and 532–629 (HYSS…DTIS). 2 stretches are compositionally biased toward polar residues: residues 243 to 259 (VNSNAQKTDAGSNSSTT) and 532 to 545 (HYSSCCSSPRTSDG). Positions 559–582 (SDEDDEEGDDDFHEPDSDEDLSDN) are enriched in acidic residues. Positions 583-602 (NDERNRDEIGSVDEESTKSD) are enriched in basic and acidic residues.

In terms of biological role, may be not required for the accumulation of phytic acid in seeds. Phytic acid is the primary storage form of phosphorus in cereal grains and other plant seeds. This chain is P-loop NTPase domain-containing protein LPA1 homolog 2, found in Arabidopsis thaliana (Mouse-ear cress).